Consider the following 194-residue polypeptide: MLSSTLRVAVVCVSNVNRSMEAHSILRRKGLSVRSFGTESHVRLPGPRPNRPVVYDFATTYKEMYNDLLRKDRERYTRNGILHILGRNERIKPGPERFQECTDFFDVIFTCEESVYDTVVEDLCSREQQTFQPVHVINMEIQDTLEDATLGAFLICEICQCLQQSDDMEDNLEELLLQMEEKAGKSFLHTVCFY.

It belongs to the SSU72 phosphatase family.

It is found in the nucleus. The catalysed reaction is O-phospho-L-seryl-[protein] + H2O = L-seryl-[protein] + phosphate. It carries out the reaction O-phospho-L-threonyl-[protein] + H2O = L-threonyl-[protein] + phosphate. Protein phosphatase that catalyzes the dephosphorylation of the C-terminal domain of RNA polymerase II. Plays a role in RNA processing and termination. This is RNA polymerase II subunit A C-terminal domain phosphatase SSU72 like protein 1 from Homo sapiens (Human).